Reading from the N-terminus, the 321-residue chain is tRNA uridine(34) hydroxylase (321 aa).

The region spanning 135-233 is the Rhodanese domain; it reads DDPDTLVIDT…YLEQVPEEES (99 aa). The Cysteine persulfide intermediate role is filled by cysteine 193. The segment at 301–321 is disordered; sequence RQRQMDQLSSASSKKSDDFSL.

This sequence belongs to the TrhO family.

The enzyme catalyses uridine(34) in tRNA + AH2 + O2 = 5-hydroxyuridine(34) in tRNA + A + H2O. Its function is as follows. Catalyzes oxygen-dependent 5-hydroxyuridine (ho5U) modification at position 34 in tRNAs. The polypeptide is tRNA uridine(34) hydroxylase (Parasynechococcus marenigrum (strain WH8102)).